The primary structure comprises 339 residues: Ketol-acid reductoisomerase (NADP(+)) (339 aa).

A KARI N-terminal Rossmann domain is found at methionine 1–threonine 182. NADP(+)-binding positions include tyrosine 24–glutamine 27, arginine 48, serine 51, serine 53, and aspartate 83–glutamine 86. Histidine 108 is an active-site residue. An NADP(+)-binding site is contributed by glycine 134. Residues threonine 183 to isoleucine 328 enclose the KARI C-terminal knotted domain. The Mg(2+) site is built by aspartate 191, glutamate 195, glutamate 227, and glutamate 231. Serine 252 provides a ligand contact to substrate.

The protein belongs to the ketol-acid reductoisomerase family. The cofactor is Mg(2+).

The catalysed reaction is (2R)-2,3-dihydroxy-3-methylbutanoate + NADP(+) = (2S)-2-acetolactate + NADPH + H(+). It carries out the reaction (2R,3R)-2,3-dihydroxy-3-methylpentanoate + NADP(+) = (S)-2-ethyl-2-hydroxy-3-oxobutanoate + NADPH + H(+). Its pathway is amino-acid biosynthesis; L-isoleucine biosynthesis; L-isoleucine from 2-oxobutanoate: step 2/4. The protein operates within amino-acid biosynthesis; L-valine biosynthesis; L-valine from pyruvate: step 2/4. Involved in the biosynthesis of branched-chain amino acids (BCAA). Catalyzes an alkyl-migration followed by a ketol-acid reduction of (S)-2-acetolactate (S2AL) to yield (R)-2,3-dihydroxy-isovalerate. In the isomerase reaction, S2AL is rearranged via a Mg-dependent methyl migration to produce 3-hydroxy-3-methyl-2-ketobutyrate (HMKB). In the reductase reaction, this 2-ketoacid undergoes a metal-dependent reduction by NADPH to yield (R)-2,3-dihydroxy-isovalerate. This chain is Ketol-acid reductoisomerase (NADP(+)), found in Bradyrhizobium diazoefficiens (strain JCM 10833 / BCRC 13528 / IAM 13628 / NBRC 14792 / USDA 110).